A 209-amino-acid polypeptide reads, in one-letter code: Glutathione S-transferase D1 (209 aa).

Positions 1 to 81 (MVDFYYLPGS…YLVEKYGKTD (81 aa)) constitute a GST N-terminal domain. Glutathione-binding positions include Ser-10, 51–53 (HTI), and 65–67 (ESR). One can recognise a GST C-terminal domain in the interval 87 to 208 (CPKKRAVINQ…AGCLEFKKYF (122 aa)).

This sequence belongs to the GST superfamily. Delta family. Homodimer.

It catalyses the reaction RX + glutathione = an S-substituted glutathione + a halide anion + H(+). The catalysed reaction is 1,1,1-trichloro-2,2-bis(4-chlorophenyl)ethane = 1,1-dichloro-2,2-bis(4-chlorophenyl)ethylene + chloride + H(+). Conjugation of reduced glutathione to a wide number of exogenous and endogenous hydrophobic electrophiles. Has DDT dehydrochlorinase activity. May be involved in detoxification. The protein is Glutathione S-transferase D1 of Drosophila melanogaster (Fruit fly).